The following is a 601-amino-acid chain: Secretogranin-2 (601 aa).

The signal sequence occupies residues methionine 1–phenylalanine 30. A disordered region spans residues glutamate 89 to glutamate 109. Residues threonine 93–proline 104 are compositionally biased toward polar residues. Residue tyrosine 151 is modified to Sulfotyrosine. Over residues valine 258–valine 273 the composition is skewed to basic and acidic residues. Residues valine 258 to asparagine 307 form a disordered region.

It belongs to the chromogranin/secretogranin protein family.

The protein resides in the secreted. Neuroendocrine protein of the granin family that regulates the biogenesis of secretory granules. This Pelophylax ridibundus (Marsh frog) protein is Secretogranin-2.